Consider the following 354-residue polypeptide: Probable RNA methyltransferase AZOSEA28700 (354 aa).

Glutamate 88 functions as the Proton acceptor in the catalytic mechanism. Positions 91 to 317 constitute a Radical SAM core domain; the sequence is LLPRDGLCVS…TKLRHSAGQD (227 aa). A disulfide bridge connects residues cysteine 98 and cysteine 322. Cysteine 105, cysteine 109, and cysteine 112 together coordinate [4Fe-4S] cluster. Residues 150 to 151, serine 180, 203 to 205, and asparagine 279 contribute to the S-adenosyl-L-methionine site; these read GE and SLH. Cysteine 322 (S-methylcysteine intermediate) is an active-site residue.

The protein belongs to the radical SAM superfamily. RlmN family. [4Fe-4S] cluster serves as cofactor.

It is found in the cytoplasm. In Aromatoleum aromaticum (strain DSM 19018 / LMG 30748 / EbN1) (Azoarcus sp. (strain EbN1)), this protein is Probable RNA methyltransferase AZOSEA28700.